A 267-amino-acid chain; its full sequence is Enolase-phosphatase E1 (267 aa).

Asp11 and Glu13 together coordinate Mg(2+). Substrate-binding positions include Ser155–Ser156 and Lys189. Asp215 contacts Mg(2+).

The protein belongs to the HAD-like hydrolase superfamily. MasA/MtnC family. In terms of assembly, monomer. It depends on Mg(2+) as a cofactor.

The protein resides in the cytoplasm. It localises to the nucleus. It catalyses the reaction 5-methylsulfanyl-2,3-dioxopentyl phosphate + H2O = 1,2-dihydroxy-5-(methylsulfanyl)pent-1-en-3-one + phosphate. The protein operates within amino-acid biosynthesis; L-methionine biosynthesis via salvage pathway; L-methionine from S-methyl-5-thio-alpha-D-ribose 1-phosphate: step 3/6. It participates in amino-acid biosynthesis; L-methionine biosynthesis via salvage pathway; L-methionine from S-methyl-5-thio-alpha-D-ribose 1-phosphate: step 4/6. Functionally, bifunctional enzyme that catalyzes the enolization of 2,3-diketo-5-methylthiopentyl-1-phosphate (DK-MTP-1-P) into the intermediate 2-hydroxy-3-keto-5-methylthiopentenyl-1-phosphate (HK-MTPenyl-1-P), which is then dephosphorylated to form the acireductone 1,2-dihydroxy-3-keto-5-methylthiopentene (DHK-MTPene). In Dictyostelium discoideum (Social amoeba), this protein is Enolase-phosphatase E1 (enoph1).